We begin with the raw amino-acid sequence, 257 residues long: tRNA (guanine-N(7)-)-methyltransferase (257 aa).

The tract at residues 1-42 is disordered; it reads MTVVVSDHQNPRPPGDDAAPLGRTGNRDRPPGSFFGRRKGHR. S-adenosyl-L-methionine contacts are provided by E84, E109, D136, and D158. D158 is a catalytic residue. Residues K162 and D194 each contribute to the substrate site.

Belongs to the class I-like SAM-binding methyltransferase superfamily. TrmB family.

It catalyses the reaction guanosine(46) in tRNA + S-adenosyl-L-methionine = N(7)-methylguanosine(46) in tRNA + S-adenosyl-L-homocysteine. It participates in tRNA modification; N(7)-methylguanine-tRNA biosynthesis. In terms of biological role, catalyzes the formation of N(7)-methylguanine at position 46 (m7G46) in tRNA. The sequence is that of tRNA (guanine-N(7)-)-methyltransferase from Nitrobacter winogradskyi (strain ATCC 25391 / DSM 10237 / CIP 104748 / NCIMB 11846 / Nb-255).